Here is a 281-residue protein sequence, read N- to C-terminus: Putative integrase/recombinase y4rD (281 aa).

Residues 5-98 form the Core-binding (CB) domain; that stretch reads LLLAPLLESY…AIRSFFHHVA (94 aa). A Tyr recombinase domain is found at 122-281; it reads EVTHHLTKAE…TMSGTENASV (160 aa). Active-site residues include Arg162, Lys188, His262, and Arg265.

This sequence belongs to the 'phage' integrase family.

Seems to be non-functional. The sequence is that of Putative integrase/recombinase y4rD from Sinorhizobium fredii (strain NBRC 101917 / NGR234).